Consider the following 366-residue polypeptide: Ribosomal RNA large subunit methyltransferase M (366 aa).

S-adenosyl-L-methionine is bound by residues Ser188, 221–224, Asp240, Asp260, and Asp277; that span reads CPGG. Lys306 acts as the Proton acceptor in catalysis.

It belongs to the class I-like SAM-binding methyltransferase superfamily. RNA methyltransferase RlmE family. RlmM subfamily. Monomer.

The protein localises to the cytoplasm. The catalysed reaction is cytidine(2498) in 23S rRNA + S-adenosyl-L-methionine = 2'-O-methylcytidine(2498) in 23S rRNA + S-adenosyl-L-homocysteine + H(+). Catalyzes the 2'-O-methylation at nucleotide C2498 in 23S rRNA. In Shigella dysenteriae serotype 1 (strain Sd197), this protein is Ribosomal RNA large subunit methyltransferase M.